The sequence spans 175 residues: NADH-ubiquinone oxidoreductase chain 6 (175 aa).

Transmembrane regions (helical) follow at residues 1–21, 24–44, 46–66, 86–106, and 149–169; these read MMYT…GVSS, SPVY…GIVV, FGGS…MMVV, IVVL…VVYL, and YGCW…FIVI.

Belongs to the complex I subunit 6 family. In terms of assembly, core subunit of respiratory chain NADH dehydrogenase (Complex I) which is composed of 45 different subunits.

The protein localises to the mitochondrion inner membrane. The catalysed reaction is a ubiquinone + NADH + 5 H(+)(in) = a ubiquinol + NAD(+) + 4 H(+)(out). Core subunit of the mitochondrial membrane respiratory chain NADH dehydrogenase (Complex I) which catalyzes electron transfer from NADH through the respiratory chain, using ubiquinone as an electron acceptor. Essential for the catalytic activity and assembly of complex I. This is NADH-ubiquinone oxidoreductase chain 6 (MT-ND6) from Dugong dugon (Dugong).